We begin with the raw amino-acid sequence, 461 residues long: Cytochrome c biogenesis protein CcsB (461 aa).

3 helical membrane passes run 32–52 (LRLA…GTVI), 91–111 (TWWF…CTFT), and 178–198 (IGPI…IWGA).

It belongs to the Ccs1/CcsB family. In terms of assembly, may interact with CcsA.

The protein resides in the cellular thylakoid membrane. Functionally, required during biogenesis of c-type cytochromes (cytochrome c6 and cytochrome f) at the step of heme attachment. This chain is Cytochrome c biogenesis protein CcsB, found in Trichormus variabilis (strain ATCC 29413 / PCC 7937) (Anabaena variabilis).